A 274-amino-acid chain; its full sequence is Protein FRG1 homolog (274 aa).

The Nuclear localization signal motif lies at 20-36; it reads KKNLFKVGKEKKKKNKD. The disordered stretch occupies residues 27 to 46; sequence GKEKKKKNKDDKEKIDPDTV. A compositionally biased stretch (basic and acidic residues) spans 34–43; sequence NKDDKEKIDP. Positions 252–268 match the Bipartite nuclear localization signal motif; it reads QADGSAHELLLDRRMKM.

The protein belongs to the FRG1 family.

It localises to the nucleus. It is found in the cajal body. Its subcellular location is the nucleolus. The protein resides in the cytoplasm. Functionally, binds to mRNA in a sequence-independent manner. May play a role in regulation of pre-mRNA splicing or in the assembly of rRNA into ribosomal subunits. May be involved in mRNA transport. May be involved in epigenetic regulation of muscle differentiation through regulation of activity of the histone-lysine N-methyltransferase KMT5B. The protein is Protein FRG1 homolog (frg-1) of Caenorhabditis elegans.